The chain runs to 645 residues: Threonine--tRNA ligase (645 aa).

Positions 1-63 constitute a TGS domain; that stretch reads MEQINIQFPD…ETDGSIEIVT (63 aa). Positions 242–540 are catalytic; it reads DHRKIGKELE…LTEETKGAFP (299 aa). Positions 336, 387, and 517 each coordinate Zn(2+).

The protein belongs to the class-II aminoacyl-tRNA synthetase family. In terms of assembly, homodimer. Zn(2+) is required as a cofactor.

It localises to the cytoplasm. The enzyme catalyses tRNA(Thr) + L-threonine + ATP = L-threonyl-tRNA(Thr) + AMP + diphosphate + H(+). Catalyzes the attachment of threonine to tRNA(Thr) in a two-step reaction: L-threonine is first activated by ATP to form Thr-AMP and then transferred to the acceptor end of tRNA(Thr). Also edits incorrectly charged L-seryl-tRNA(Thr). This is Threonine--tRNA ligase from Staphylococcus aureus (strain bovine RF122 / ET3-1).